We begin with the raw amino-acid sequence, 213 residues long: MTQANGPLRIGIGGPVGSGKTTLTEKLCKALRDEFSIAVVTNDIYTREDAMMLARLQALPEDRIVGVETGGCPHTAIREDASINLQAIAELNRKFPDLDIIFIESGGDNLAATFSPDLADLTLYVISVCQGEEIPRKGGPAITRSDFLIINKSDLAPYVNVNLDVMESDAARMRGKRPFGFTDLSRGKGLREVIDFIVEHGGLRVGTATSTAA.

Residue 14 to 21 (GPVGSGKT) participates in GTP binding.

The protein belongs to the SIMIBI class G3E GTPase family. UreG subfamily. Homodimer. UreD, UreF and UreG form a complex that acts as a GTP-hydrolysis-dependent molecular chaperone, activating the urease apoprotein by helping to assemble the nickel containing metallocenter of UreC. The UreE protein probably delivers the nickel.

It localises to the cytoplasm. Functionally, facilitates the functional incorporation of the urease nickel metallocenter. This process requires GTP hydrolysis, probably effectuated by UreG. In Mesorhizobium japonicum (strain LMG 29417 / CECT 9101 / MAFF 303099) (Mesorhizobium loti (strain MAFF 303099)), this protein is Urease accessory protein UreG.